Here is a 236-residue protein sequence, read N- to C-terminus: Probable fimbrial chaperone EcpE (236 aa).

A signal peptide spans Met1–Ala27.

Belongs to the EcpB/EcpE family.

Functionally, part of the ecpRABCDE operon, which encodes the E.coli common pilus (ECP). ECP is found in both commensal and pathogenic strains and plays a dual role in early-stage biofilm development and host cell recognition. The chain is Probable fimbrial chaperone EcpE (ecpE) from Escherichia coli (strain K12).